We begin with the raw amino-acid sequence, 330 residues long: Elongation factor Ts, mitochondrial (330 aa).

The N-terminal 16 residues, 1-16, are a transit peptide targeting the mitochondrion; the sequence is MYRNCRKAFTFSLRHY.

It belongs to the EF-Ts family.

It localises to the mitochondrion. In terms of biological role, associates with the EF-Tu.GDP complex and induces the exchange of GDP to GTP. It remains bound to the aminoacyl-tRNA.EF-Tu.GTP complex up to the GTP hydrolysis stage on the ribosome. The polypeptide is Elongation factor Ts, mitochondrial (Laccaria bicolor (strain S238N-H82 / ATCC MYA-4686) (Bicoloured deceiver)).